The chain runs to 397 residues: Elongation factor Tu (397 aa).

The 197-residue stretch at 10 to 206 folds into the tr-type G domain; the sequence is KPHVNIGTIG…EVDAYIPTPE (197 aa). The tract at residues 19 to 26 is G1; the sequence is GHVDHGKT. 19-26 contributes to the GTP binding site; sequence GHVDHGKT. Residue threonine 26 coordinates Mg(2+). The G2 stretch occupies residues 60–64; the sequence is GITIN. A G3 region spans residues 81–84; the sequence is DCPG. GTP-binding positions include 81–85 and 136–139; these read DCPGH and NKAD. Residues 136-139 are G4; the sequence is NKAD. The interval 174 to 176 is G5; the sequence is SAL.

It belongs to the TRAFAC class translation factor GTPase superfamily. Classic translation factor GTPase family. EF-Tu/EF-1A subfamily. As to quaternary structure, monomer.

It is found in the cytoplasm. It catalyses the reaction GTP + H2O = GDP + phosphate + H(+). Its function is as follows. GTP hydrolase that promotes the GTP-dependent binding of aminoacyl-tRNA to the A-site of ribosomes during protein biosynthesis. The polypeptide is Elongation factor Tu (Clostridium acetobutylicum (strain ATCC 824 / DSM 792 / JCM 1419 / IAM 19013 / LMG 5710 / NBRC 13948 / NRRL B-527 / VKM B-1787 / 2291 / W)).